Here is a 330-residue protein sequence, read N- to C-terminus: tRNA uridine(34) hydroxylase (330 aa).

The region spanning 123 to 217 is the Rhodanese domain; it reads SDPETILVDT…YLEEVPKEES (95 aa). Cys-177 acts as the Cysteine persulfide intermediate in catalysis. Positions 310–330 are disordered; that stretch reads LNKQQKQQAKEIARKKAKSEI. Over residues 317-330 the composition is skewed to basic and acidic residues; it reads QAKEIARKKAKSEI.

Belongs to the TrhO family.

It catalyses the reaction uridine(34) in tRNA + AH2 + O2 = 5-hydroxyuridine(34) in tRNA + A + H2O. Its function is as follows. Catalyzes oxygen-dependent 5-hydroxyuridine (ho5U) modification at position 34 in tRNAs. In Francisella philomiragia subsp. philomiragia (strain ATCC 25017 / CCUG 19701 / FSC 153 / O#319-036), this protein is tRNA uridine(34) hydroxylase.